The primary structure comprises 1072 residues: Neurofilament heavy polypeptide (1072 aa).

At Ser74 the chain carries Phosphoserine. Residues 94–409 (EKEQLQALND…KLLEGEECRI (316 aa)) form the IF rod domain. 3 coiled-coil regions span residues 98 to 132 (LQAL…LRQQ), 174 to 222 (IAHV…LQEE), and 293 to 380 (LDRL…QLRE). A 55 X 6 AA approximate tandem repeats of K-S-P-[VAGSE]-[KEVTSGA]-[EAVK] region spans residues 278 to 643 (TVQSTLQSEE…AKSPAEAKSP (366 aa)). Phosphoserine occurs at positions 343, 414, and 417. The tract at residues 454–1072 (EEQTEEIQVT…PEDKAAKGDK (619 aa)) is disordered. Over residues 455–487 (EQTEEIQVTEEVTEEEDKEAQGEEEEEAEEGGE) the composition is skewed to acidic residues. The span at 488–499 (EAATTSPPAEEA) shows a compositional bias: low complexity. Ser501 is subject to Phosphoserine. A compositionally biased stretch (basic and acidic residues) spans 501-584 (SPEKETKSPV…KSPAEAKSPA (84 aa)). 36 tandem repeats follow at residues 507–512 (KSPVKE), 515–520 (KSPAEA), 521–526 (KSPAEA), 527–532 (KSPAEA), 533–538 (KSPAEV), 539–544 (KSPAEV), 545–550 (KSPAEA), 551–556 (KSPAEA), 557–562 (KSPAEV), 563–568 (KSPAEV), 569–574 (KSPAEA), 575–580 (KSPAEA), 581–586 (KSPAEV), 587–592 (KSPATV), 593–598 (KSPGEA), 599–604 (KSPAEA), 605–610 (KSPAEV), 611–616 (KSPVEA), 617–622 (KSPAEA), 623–628 (KSPASV), 629–634 (KSPGEA), 635–640 (KSPAEA), 641–646 (KSPAEV), 647–652 (KSPATV), 653–658 (KSPVEA), 659–664 (KSPAEV), 665–670 (KSPVTV), 671–676 (KSPAEA), 677–682 (KSPVEV), 683–688 (KSPASV), 689–694 (KSPSEA), 695–700 (KSPAGA), 701–706 (KSPAEA), 707–712 (KSPVVA), 713–718 (KSPAEA), and 719–724 (KSPAEA). 37 positions are modified to phosphoserine: Ser516, Ser522, Ser528, Ser534, Ser540, Ser546, Ser552, Ser558, Ser564, Ser570, Ser576, Ser582, Ser588, Ser594, Ser600, Ser606, Ser612, Ser618, Ser624, Ser627, Ser630, Ser636, Ser642, Ser648, Ser654, Ser660, Ser666, Ser672, Ser678, Ser684, Ser687, Ser690, Ser696, Ser702, Ser708, Ser714, and Ser720. The span at 600–620 (SPAEAKSPAEVKSPVEAKSPA) shows a compositional bias: basic and acidic residues. A compositionally biased stretch (low complexity) spans 621 to 631 (EAKSPASVKSP). Residues 720–774 (SPAEAKPPAEAKSPAEAKSPAEAKSPAEAKSPAEAKSPVEVKSPEKAKSPVKEGA) are compositionally biased toward basic and acidic residues. Residues 725 to 730 (KPPAEA) form a 37; approximate repeat. 7 consecutive repeat copies span residues 731 to 736 (KSPAEA), 737 to 742 (KSPAEA), 743 to 748 (KSPAEA), 749 to 754 (KSPAEA), 755 to 760 (KSPVEV), 761 to 766 (KSPEKA), and 767 to 772 (KSPVKE). Ser732, Ser738, Ser744, Ser750, Ser756, and Ser762 each carry phosphoserine. One copy of the 45; approximate repeat lies at 775-780 (KSLAEA). Ser776, Ser782, and Ser788 each carry phosphoserine. 2 repeat units span residues 781 to 786 (KSPEKA) and 787 to 792 (KSPVKE). Basic and acidic residues-rich tracts occupy residues 781 to 953 (KSPE…KAAA) and 963 to 1072 (GVKE…KGDK). The stretch at 795–800 (KPPAEV) is one 48; approximate repeat. A run of 4 repeats spans residues 801-806 (KSPEKA), 807-812 (KSPMKE), 815-820 (KSPEKA), and 826-831 (KSPEAK). Phosphoserine occurs at positions 802, 808, 816, and 827. Residue Thr832 is modified to Phosphothreonine. Ser846, Ser852, Ser860, Ser880, and Ser937 each carry phosphoserine. 3 tandem repeats follow at residues 851–856 (KSPAKE), 859–864 (KSPEKE), and 879–884 (KSPVEE).

It belongs to the intermediate filament family. In terms of assembly, forms heterodimers with NEFL; which can further hetero-oligomerize (in vitro). Forms heterodimers with INA (in vitro). Post-translationally, there are a number of repeats of the tripeptide K-S-P, NFH is phosphorylated on a number of the serines in this motif. It is thought that phosphorylation of NFH results in the formation of interfilament cross bridges that are important in the maintenance of axonal caliber. Phosphorylation seems to play a major role in the functioning of the larger neurofilament polypeptides (NF-M and NF-H), the levels of phosphorylation being altered developmentally and coincidentally with a change in the neurofilament function. In terms of processing, phosphorylated in the head and rod regions by the PKC kinase PKN1, leading to the inhibition of polymerization. Expressed in the dorsal root ganglion neurons (at protein level). Expressed in cutaneous and muscular sensory neurons.

Its subcellular location is the cytoplasm. The protein resides in the cytoskeleton. It localises to the cell projection. It is found in the axon. Its function is as follows. Neurofilaments usually contain three intermediate filament proteins: NEFL, NEFM, and NEFH which are involved in the maintenance of neuronal caliber. NEFH has an important function in mature axons that is not subserved by the two smaller NEF proteins. May additionally cooperate with the neuronal intermediate filament proteins PRPH and INA to form neuronal filamentous networks. This Rattus norvegicus (Rat) protein is Neurofilament heavy polypeptide (Nefh).